Reading from the N-terminus, the 140-residue chain is Cytochrome c-type biogenesis protein CcmE (140 aa).

At 1-7 the chain is on the cytoplasmic side; it reads MTKRQNR. A helical; Signal-anchor for type II membrane protein transmembrane segment spans residues 8 to 28; that stretch reads MVLVALLVIGVSLAGYLGLKA. The Periplasmic portion of the chain corresponds to 29 to 140; that stretch reads FNENLLYFLS…DALEKAKNKQ (112 aa). 2 residues coordinate heme: His-120 and Tyr-124.

Belongs to the CcmE/CycJ family.

The protein resides in the cell inner membrane. Functionally, heme chaperone required for the biogenesis of c-type cytochromes. Transiently binds heme delivered by CcmC and transfers the heme to apo-cytochromes in a process facilitated by CcmF and CcmH. This Vesicomyosocius okutanii subsp. Calyptogena okutanii (strain HA) protein is Cytochrome c-type biogenesis protein CcmE.